The primary structure comprises 320 residues: O(6)-methylguanine-induced apoptosis 2 (320 aa).

The interval 46–91 (LNESPGPGSYLSHSPAEGCSPSFSKRGTGSFASKGGRVPRSFQRLS) is disordered. 7 STPGR repeats span residues 49-82 (SPGP…KGGR), 91-103 (SPGP…QMSL), 132-163 (NPAP…KTRR), 173-192 (GPSP…SPQA), 213-233 (PGPG…TVLP), 254-266 (PGPG…NYNR), and 294-305 (PGPGFYEPTVLS). The span at 66 to 76 (PSFSKRGTGSF) shows a compositional bias: polar residues. The tract at residues 207–226 (PVRNNIPGPGTYNPHQPPEP) is disordered.

It belongs to the STPG1 family.

The protein localises to the cytoplasm. It localises to the nucleus. In terms of biological role, may positively contribute to the induction of apoptosis triggered by O(6)-methylguanine. This is O(6)-methylguanine-induced apoptosis 2 (stpg1) from Danio rerio (Zebrafish).